We begin with the raw amino-acid sequence, 1145 residues long: Error-prone DNA polymerase (1145 aa).

The protein belongs to the DNA polymerase type-C family. DnaE2 subfamily.

The protein resides in the cytoplasm. The catalysed reaction is DNA(n) + a 2'-deoxyribonucleoside 5'-triphosphate = DNA(n+1) + diphosphate. Its function is as follows. DNA polymerase involved in damage-induced mutagenesis and translesion synthesis (TLS). It is not the major replicative DNA polymerase. The protein is Error-prone DNA polymerase of Rhodopirellula baltica (strain DSM 10527 / NCIMB 13988 / SH1).